We begin with the raw amino-acid sequence, 215 residues long: Adenylate kinase (215 aa).

10 to 15 is a binding site for ATP; that stretch reads GAGKGT. The NMP stretch occupies residues 30-59; the sequence is STGDMLRAAVKAGTELGLIAKSVMDSGGLV. AMP is bound by residues T31, R36, 57 to 59, 85 to 88, and Q92; these read GLV and GFPR. Positions 122–159 are LID; the sequence is GRRVHEASGRVYHTVYNPPKVEGKDDVTGDDLVQRKDD. ATP contacts are provided by residues R123 and 132 to 133; that span reads VY. R156 and R167 together coordinate AMP. Position 201 (G201) interacts with ATP.

This sequence belongs to the adenylate kinase family. Monomer.

The protein localises to the cytoplasm. The enzyme catalyses AMP + ATP = 2 ADP. It functions in the pathway purine metabolism; AMP biosynthesis via salvage pathway; AMP from ADP: step 1/1. Catalyzes the reversible transfer of the terminal phosphate group between ATP and AMP. Plays an important role in cellular energy homeostasis and in adenine nucleotide metabolism. This Pseudomonas fluorescens (strain SBW25) protein is Adenylate kinase.